The sequence spans 329 residues: Malate dehydrogenase (329 aa).

Residue 12–18 (GAAGQIG) participates in NAD(+) binding. Residues Arg95 and Arg101 each coordinate substrate. NAD(+) is bound by residues Asn108, Gln115, and 132–134 (VGN). The substrate site is built by Asn134 and Arg165. His190 functions as the Proton acceptor in the catalytic mechanism.

The protein belongs to the LDH/MDH superfamily. MDH type 2 family.

It carries out the reaction (S)-malate + NAD(+) = oxaloacetate + NADH + H(+). Its function is as follows. Catalyzes the reversible oxidation of malate to oxaloacetate. The sequence is that of Malate dehydrogenase from Bordetella petrii (strain ATCC BAA-461 / DSM 12804 / CCUG 43448).